Here is a 248-residue protein sequence, read N- to C-terminus: Segregation and condensation protein A (248 aa).

Belongs to the ScpA family. Component of a cohesin-like complex composed of ScpA, ScpB and the Smc homodimer, in which ScpA and ScpB bind to the head domain of Smc. The presence of the three proteins is required for the association of the complex with DNA.

The protein localises to the cytoplasm. Its function is as follows. Participates in chromosomal partition during cell division. May act via the formation of a condensin-like complex containing Smc and ScpB that pull DNA away from mid-cell into both cell halves. The polypeptide is Segregation and condensation protein A (Clostridium perfringens (strain ATCC 13124 / DSM 756 / JCM 1290 / NCIMB 6125 / NCTC 8237 / Type A)).